The primary structure comprises 356 residues: S-adenosylmethionine:tRNA ribosyltransferase-isomerase (356 aa).

Belongs to the QueA family. As to quaternary structure, monomer.

It localises to the cytoplasm. It catalyses the reaction 7-aminomethyl-7-carbaguanosine(34) in tRNA + S-adenosyl-L-methionine = epoxyqueuosine(34) in tRNA + adenine + L-methionine + 2 H(+). It functions in the pathway tRNA modification; tRNA-queuosine biosynthesis. Its function is as follows. Transfers and isomerizes the ribose moiety from AdoMet to the 7-aminomethyl group of 7-deazaguanine (preQ1-tRNA) to give epoxyqueuosine (oQ-tRNA). In Escherichia coli O127:H6 (strain E2348/69 / EPEC), this protein is S-adenosylmethionine:tRNA ribosyltransferase-isomerase.